A 631-amino-acid polypeptide reads, in one-letter code: uncharacterized protein (631 aa).

This is an uncharacterized protein from Escherichia coli (strain K12).